A 99-amino-acid chain; its full sequence is Co-chaperonin GroES (99 aa).

The protein belongs to the GroES chaperonin family. In terms of assembly, heptamer of 7 subunits arranged in a ring. Interacts with the chaperonin GroEL.

It localises to the cytoplasm. Its function is as follows. Together with the chaperonin GroEL, plays an essential role in assisting protein folding. The GroEL-GroES system forms a nano-cage that allows encapsulation of the non-native substrate proteins and provides a physical environment optimized to promote and accelerate protein folding. GroES binds to the apical surface of the GroEL ring, thereby capping the opening of the GroEL channel. The protein is Co-chaperonin GroES of Corynebacterium kroppenstedtii (strain DSM 44385 / JCM 11950 / CIP 105744 / CCUG 35717).